Consider the following 154-residue polypeptide: UPF0178 protein GDI0551/Gdia_1457 (154 aa).

This sequence belongs to the UPF0178 family.

The protein is UPF0178 protein GDI0551/Gdia_1457 of Gluconacetobacter diazotrophicus (strain ATCC 49037 / DSM 5601 / CCUG 37298 / CIP 103539 / LMG 7603 / PAl5).